The following is an 858-amino-acid chain: Potassium transporter 7 (858 aa).

Composition is skewed to acidic residues over residues 1–16 and 38–53; these read MAEE…EEID and QDDD…DNDG. Positions 1 to 68 are disordered; it reads MAEESSMEGS…LESDEDEIPE (68 aa). Residues 1-104 lie on the Cytoplasmic side of the membrane; the sequence is MAEESSMEGS…DYEDLTVGRK (104 aa). A helical transmembrane segment spans residues 105–125; it reads VLLAFQTLGVVFGDVGTSPLY. The Extracellular segment spans residues 126 to 147; sequence TFSVMFSKSPVQEKEDVIGALS. Residues 148–168 form a helical membrane-spanning segment; the sequence is LVLYTLLLVPLIKYVLVVLWA. Residues 169-232 are Cytoplasmic-facing; that stretch reads NDDGEGGTFA…KLENSLILKK (64 aa). Residues 233-253 traverse the membrane as a helical segment; the sequence is ILLVLVLAGTSMVIADGVVTP. Over 254–269 the chain is Extracellular; the sequence is AMSVMSAVGGLKVGVD. Residues 270–290 form a helical membrane-spanning segment; the sequence is VVEQDQVVMISVAFLVILFSL. At 291–297 the chain is on the cytoplasmic side; sequence QKYGTSK. A helical transmembrane segment spans residues 298–318; it reads MGLVVGPALLIWFCSLAGIGI. The Extracellular portion of the chain corresponds to 319 to 345; it reads YNLIKYDSSVYRAFNPVHIYYFFKRNS. The helical transmembrane segment at 346–366 threads the bilayer; the sequence is INAWYALGGCILCATGSEALF. Over 367-380 the chain is Cytoplasmic; it reads ADLCYFSVRSVQLT. The helical transmembrane segment at 381–401 threads the bilayer; that stretch reads FVCLVLPCLMLGYMGQAAYLM. The Extracellular portion of the chain corresponds to 402–413; the sequence is ENHADASQAFFS. The chain crosses the membrane as a helical span at residues 414–434; sequence SVPGSAFWPVLFIANIAALIA. Over 435-470 the chain is Cytoplasmic; the sequence is SRTMTTATFSCIKQSTALGCFPRLKIIHTSRKFMGQ. The chain crosses the membrane as a helical span at residues 471–491; that stretch reads IYIPVLNWFLLAVCLVVVCSI. Topologically, residues 492 to 496 are extracellular; sequence SSIDE. A helical transmembrane segment spans residues 497–517; sequence IGNAYGMAELGVMMTTTILVT. Leu518 is a topological domain (cytoplasmic). Residues 519-539 traverse the membrane as a helical segment; it reads IMLLIWQINIVIVIAFLVVFL. The Extracellular segment spans residues 540-552; that stretch reads GVELVFFSSVIAS. The helical transmembrane segment at 553–573 threads the bilayer; it reads VGDGSWIILVFAVIMFGIMYI. At 574–858 the chain is on the cytoplasmic side; sequence WNYGSKLRYE…LMQVGMTYMV (285 aa). The disordered stretch occupies residues 707–731; the sequence is QERSLESDGNDDSDSEEDFPGSRVV. The segment covering 714–725 has biased composition (acidic residues); sequence DGNDDSDSEEDF. Phosphoserine is present on residues Ser719 and Ser721.

This sequence belongs to the HAK/KUP transporter (TC 2.A.72.3) family.

The protein resides in the cell membrane. Functionally, probable potassium transporter. The sequence is that of Potassium transporter 7 (POT7) from Arabidopsis thaliana (Mouse-ear cress).